The primary structure comprises 269 residues: 3-deoxy-manno-octulosonate cytidylyltransferase (269 aa).

This sequence belongs to the KdsB family.

It localises to the cytoplasm. The enzyme catalyses 3-deoxy-alpha-D-manno-oct-2-ulosonate + CTP = CMP-3-deoxy-beta-D-manno-octulosonate + diphosphate. It participates in nucleotide-sugar biosynthesis; CMP-3-deoxy-D-manno-octulosonate biosynthesis; CMP-3-deoxy-D-manno-octulosonate from 3-deoxy-D-manno-octulosonate and CTP: step 1/1. The protein operates within bacterial outer membrane biogenesis; lipopolysaccharide biosynthesis. In terms of biological role, activates KDO (a required 8-carbon sugar) for incorporation into bacterial lipopolysaccharide in Gram-negative bacteria. This chain is 3-deoxy-manno-octulosonate cytidylyltransferase, found in Cupriavidus taiwanensis (strain DSM 17343 / BCRC 17206 / CCUG 44338 / CIP 107171 / LMG 19424 / R1) (Ralstonia taiwanensis (strain LMG 19424)).